Here is a 370-residue protein sequence, read N- to C-terminus: Cobalt-precorrin-5B C(1)-methyltransferase (370 aa).

Belongs to the CbiD family.

The catalysed reaction is Co-precorrin-5B + S-adenosyl-L-methionine = Co-precorrin-6A + S-adenosyl-L-homocysteine. It participates in cofactor biosynthesis; adenosylcobalamin biosynthesis; cob(II)yrinate a,c-diamide from sirohydrochlorin (anaerobic route): step 6/10. Functionally, catalyzes the methylation of C-1 in cobalt-precorrin-5B to form cobalt-precorrin-6A. The chain is Cobalt-precorrin-5B C(1)-methyltransferase from Prochlorococcus marinus (strain MIT 9215).